The primary structure comprises 245 residues: Thymidylate kinase (245 aa).

55–62 (GIDGVGKS) serves as a coordination point for ATP.

This sequence belongs to the thymidylate kinase family.

The enzyme catalyses dTMP + ATP = dTDP + ADP. Its function is as follows. Phosphorylation of dTMP to form dTDP in both de novo and salvage pathways of dTTP synthesis. This is Thymidylate kinase from Rhodopirellula baltica (strain DSM 10527 / NCIMB 13988 / SH1).